We begin with the raw amino-acid sequence, 930 residues long: Isoleucine--tRNA ligase (930 aa).

The short motif at 57–67 (PYANGNIHVGH) is the 'HIGH' region element. L-isoleucyl-5'-AMP is bound at residue glutamate 554. Positions 595 to 599 (KMSKS) match the 'KMSKS' region motif. Lysine 598 provides a ligand contact to ATP. Zn(2+) contacts are provided by cysteine 888, cysteine 891, cysteine 908, and cysteine 911.

The protein belongs to the class-I aminoacyl-tRNA synthetase family. IleS type 1 subfamily. In terms of assembly, monomer. Zn(2+) serves as cofactor.

It is found in the cytoplasm. The catalysed reaction is tRNA(Ile) + L-isoleucine + ATP = L-isoleucyl-tRNA(Ile) + AMP + diphosphate. Its function is as follows. Catalyzes the attachment of isoleucine to tRNA(Ile). As IleRS can inadvertently accommodate and process structurally similar amino acids such as valine, to avoid such errors it has two additional distinct tRNA(Ile)-dependent editing activities. One activity is designated as 'pretransfer' editing and involves the hydrolysis of activated Val-AMP. The other activity is designated 'posttransfer' editing and involves deacylation of mischarged Val-tRNA(Ile). In Streptococcus pneumoniae (strain JJA), this protein is Isoleucine--tRNA ligase.